The following is a 319-amino-acid chain: mRNA decay activator protein ZFP36 (319 aa).

The necessary for nuclear export stretch occupies residues 1 to 15; sequence MDLSAIYESLQSMSH. Residues 1–92 form a necessary and sufficient for the association with mRNA decay enzymes and mRNA decay activation region; that stretch reads MDLSAIYESL…PTSPTATPTT (92 aa). Necessary for localization of ARE-containing mRNAs to processing bodies (PBs) stretches follow at residues 1–166 and 92–319; these read MDLS…DLAL and TSSR…SVSE. Residue Ser-52 is modified to Phosphoserine; by MAPKAPK2. Ser-58 is subject to Phosphoserine. Residues 63 to 67 form a P-P-P-P-G repeat; that stretch reads PPPPG. Over residues 65–84 the composition is skewed to pro residues; sequence PPGFAPLAPRPGPELSPSPT. A disordered region spans residues 65–95; that stretch reads PPGFAPLAPRPGPELSPSPTSPTATPTTSSR. A phosphoserine mark is found at Ser-80 and Ser-82. At Thr-84 the chain carries Phosphothreonine. Ser-85 is subject to Phosphoserine. Over residues 85-94 the composition is skewed to low complexity; that stretch reads SPTATPTTSS. The segment at 87–160 is necessary for nuclear localization; sequence TATPTTSSRY…GSRCHFIHNP (74 aa). The necessary for RNA-binding stretch occupies residues 89-165; that stretch reads TPTTSSRYKT…FIHNPTEDLA (77 aa). C3H1-type zinc fingers lie at residues 95–123 and 133–161; these read RYKT…HGLG and KYKT…HNPT. The interval 95 to 186 is necessary for interaction with PABPN1; the sequence is RYKTELCRTY…ISFSGLPSGR (92 aa). Positions 166–319 are necessary for mRNA decay activation; sequence LPGQPHVLRQ…PIFNRISVSE (154 aa). The residue at position 178 (Ser-178) is a Phosphoserine; by MAPKAPK2. A compositionally biased stretch (low complexity) spans 179 to 188; the sequence is FSGLPSGRRS. Residues 179 to 309 form a disordered region; sequence FSGLPSGRRS…PQTPAPPRRL (131 aa). Ser-189 carries the post-translational modification Phosphoserine. Residues 190-194 form a P-P-P-P-G repeat; that stretch reads PPPPG. Positions 196–208 are enriched in low complexity; sequence SGPSLSSCSFSPS. At Ser-210 the chain carries Phosphoserine. One copy of the P-P-P-P-G repeat lies at 211–215; that stretch reads PPPPG. At Ser-220 the chain carries Phosphoserine; by MAPK1; in vitro. Thr-250 bears the Phosphothreonine mark. Residues Ser-269, Ser-289, and Ser-316 each carry the phosphoserine modification. A compositionally biased stretch (low complexity) spans 279–289; sequence SSGSSLGGSDS. Residues 305-319 are interaction with CNOT1; it reads PPRRLPIFNRISVSE.

As to quaternary structure, associates with cytoplasmic CCR4-NOT and PAN2-PAN3 deadenylase complexes to trigger ARE-containing mRNA deadenylation and decay processes. Part of a mRNA decay activation complex at least composed of poly(A)-specific exoribonucleases CNOT6, EXOSC2 and XRN1 and mRNA-decapping enzymes DCP1A and DCP2. Associates with the RNA exosome complex. Interacts (via phosphorylated form) with 14-3-3 proteins; these interactions promote exclusion of ZFP36 from cytoplasmic stress granules in response to arsenite treatment in a MAPKAPK2-dependent manner and does not prevent CCR4-NOT deadenylase complex recruitment or ZFP36-induced ARE-containing mRNA deadenylation and decay processes. Interacts with 14-3-3 proteins; these interactions occur in response to rapamycin in an Akt-dependent manner. Interacts with AGO2 and AGO4. Interacts (via C-terminus) with CNOT1; this interaction occurs in a RNA-independent manner and induces mRNA deadenylation. Interacts (via N-terminus) with CNOT6. Interacts with CNOT6L. Interacts (via C-terminus) with CNOT7; this interaction occurs in a RNA-independent manner, induces mRNA deadenylation and is inhibited in a phosphorylation MAPKAPK2-dependent manner. Interacts (via unphosphorylated form) with CNOT8; this interaction occurs in a RNA-independent manner and is inhibited in a phosphorylation MAPKAPK2-dependent manner. Interacts with DCP1A. Interacts (via N-terminus) with DCP2. Interacts with EDC3. Interacts (via N-terminus) with EXOSC2. Interacts with heat shock 70 kDa proteins. Interacts with KHSRP; this interaction increases upon cytokine-induced treatment. Interacts with MAP3K4; this interaction enhances the association with SH3KBP1/CIN85. Interacts with MAPKAPK2; this interaction occurs upon skeletal muscle satellite cell activation. Interacts with NCL. Interacts with NUP214; this interaction increases upon lipopolysaccharide (LPS) stimulation. Interacts with PABPC1; this interaction occurs in a RNA-dependent manner. Interacts (via hypophosphorylated form) with PABPN1 (via RRM domain and C-terminal arginine-rich region); this interaction occurs in the nucleus in a RNA-independent manner, decreases in presence of single-stranded poly(A) RNA-oligomer and in a p38 MAPK-dependent-manner and inhibits nuclear poly(A) tail synthesis. Interacts with PAN2. Interacts (via C3H1-type zinc finger domains) with PKM. Interacts (via C3H1-type zinc finger domains) with nuclear RNA poly(A) polymerase. Interacts with PPP2CA; this interaction occurs in LPS-stimulated cells and induces ZFP36 dephosphorylation, and hence may promote ARE-containing mRNAs decay. Interacts (via C-terminus) with PRR5L (via C-terminus); this interaction may accelerate ZFP36-mediated mRNA decay during stress. Interacts (via C-terminus) with SFN; this interaction occurs in a phosphorylation-dependent manner. Interacts (via extreme C-terminal region) with SH3KBP1/CIN85 (via SH3 domains); this interaction enhances MAP3K4-induced phosphorylation of ZFP36 at Ser-58 and Ser-85 and does not alter neither ZFP36 binding to ARE-containing transcripts nor TNF-alpha mRNA decay. Interacts with XRN1. Interacts (via C-terminus and Ser-178 phosphorylated form) with YWHAB; this interaction occurs in a p38/MAPKAPK2-dependent manner, increases cytoplasmic localization of ZFP36 and protects ZFP36 from Ser-178 dephosphorylation by serine/threonine phosphatase 2A, and hence may be crucial for stabilizing ARE-containing mRNAs. Interacts (via phosphorylated form) with YWHAE. Interacts (via C-terminus) with YWHAG; this interaction occurs in a phosphorylation-dependent manner. Interacts with YWHAH; this interaction occurs in a phosphorylation-dependent manner. Interacts with YWHAQ; this interaction occurs in a phosphorylation-dependent manner. Interacts with (via C-terminus) YWHAZ; this interaction occurs in a phosphorylation-dependent manner. Does not interact with SH3KBP1. Interacts (via the 4EHP-binding motif) with EIF4E2; the interaction is direct. Interacts (via P-P-P-P-G repeats) with GIGYF2; the interaction is direct. Post-translationally, phosphorylated. Phosphorylation at serine and/or threonine residues occurs in a p38 MAPK- and MAPKAPK2-dependent manner. Phosphorylated by MAPKAPK2 at Ser-52 and Ser-178; phosphorylation increases its stability and cytoplasmic localization, promotes binding to 14-3-3 adapter proteins and inhibits the recruitment of cytoplasmic CCR4-NOT and PAN2-PAN3 deadenylase complexes to the mRNA decay machinery, thereby inhibiting ZFP36-induced ARE-containing mRNA deadenylation and decay processes. Phosphorylation by MAPKAPK2 does not impair ARE-containing RNA-binding. Phosphorylated in a MAPKAPK2- and p38 MAPK-dependent manner upon skeletal muscle satellite cell activation; this phosphorylation inhibits ZFP36-mediated mRNA decay activity, and hence stabilizes MYOD1 mRNA. Phosphorylated by MAPK1 upon mitogen stimulation. Phosphorylated at Ser-58 and Ser-85; these phosphorylations increase in a SH3KBP1-dependent manner. Phosphorylated at serine and threonine residues in a pyruvate kinase PKM- and p38 MAPK-dependent manner. Phosphorylation at Ser-52 may participate in the PKM-mediated degradation of ZFP36 in a p38 MAPK-dependent manner. Dephosphorylated by serine/threonine phosphatase 2A at Ser-178. Ubiquitinated; pyruvate kinase (PKM)-dependent ubiquitination leads to proteasomal degradation through a p38 MAPK signaling pathway. Expressed in skeletal muscle satellite cells. Strongly expressed in differentiated adipocytes compared to preadipocytes (at protein level). Expressed in embryonic stem cells (ESCs). Expressed in heart, placenta, kidney, intestine, liver, lung, thymus, fat and spleen.

The protein resides in the nucleus. It is found in the cytoplasm. The protein localises to the cytoplasmic granule. It localises to the P-body. Its function is as follows. Zinc-finger RNA-binding protein that destabilizes numerous cytoplasmic AU-rich element (ARE)-containing mRNA transcripts by promoting their poly(A) tail removal or deadenylation, and hence provide a mechanism for attenuating protein synthesis. Acts as an 3'-untranslated region (UTR) ARE mRNA-binding adapter protein to communicate signaling events to the mRNA decay machinery. Recruits deadenylase CNOT7 (and probably the CCR4-NOT complex) via association with CNOT1, and hence promotes ARE-mediated mRNA deadenylation. Also functions by recruiting components of the cytoplasmic RNA decay machinery to the bound ARE-containing mRNAs. Self-regulates by destabilizing its own mRNA. Binds to 3'-UTR ARE of numerous mRNAs and of its own mRNA. Plays a role in anti-inflammatory responses; suppresses tumor necrosis factor (TNF)-alpha production by stimulating ARE-mediated TNF-alpha mRNA decay and several other inflammatory ARE-containing mRNAs in interferon (IFN)- and/or lipopolysaccharide (LPS)-induced macrophages. Also plays a role in the regulation of dendritic cell maturation at the post-transcriptional level, and hence operates as part of a negative feedback loop to limit the inflammatory response. Promotes ARE-mediated mRNA decay of hypoxia-inducible factor HIF1A mRNA during the response of endothelial cells to hypoxia. Positively regulates early adipogenesis of preadipocytes by promoting ARE-mediated mRNA decay of immediate early genes (IEGs). Negatively regulates hematopoietic/erythroid cell differentiation by promoting ARE-mediated mRNA decay of the transcription factor STAT5B mRNA. Plays a role in maintaining skeletal muscle satellite cell quiescence by promoting ARE-mediated mRNA decay of the myogenic determination factor MYOD1 mRNA. Also associates with and regulates the expression of non-ARE-containing target mRNAs at the post-transcriptional level, such as MHC class I mRNAs. Participates in association with argonaute RISC catalytic components in the ARE-mediated mRNA decay mechanism; assists microRNA (miRNA) targeting ARE-containing mRNAs. May also play a role in the regulation of cytoplasmic mRNA decapping; enhances decapping of ARE-containing RNAs, in vitro. Involved in the delivery of target ARE-mRNAs to processing bodies (PBs). In addition to its cytosolic mRNA-decay function, affects nuclear pre-mRNA processing. Negatively regulates nuclear poly(A)-binding protein PABPN1-stimulated polyadenylation activity on ARE-containing pre-mRNA during LPS-stimulated macrophages. Also involved in the regulation of stress granule (SG) and P-body (PB) formation and fusion. Plays a role in the regulation of keratinocyte proliferation, differentiation and apoptosis. Plays a role as a tumor suppressor by inhibiting cell proliferation in breast cancer cells. This chain is mRNA decay activator protein ZFP36, found in Mus musculus (Mouse).